We begin with the raw amino-acid sequence, 192 residues long: Segregation and condensation protein B (192 aa).

Belongs to the ScpB family. In terms of assembly, homodimer. Homodimerization may be required to stabilize the binding of ScpA to the Smc head domains. Component of a cohesin-like complex composed of ScpA, ScpB and the Smc homodimer, in which ScpA and ScpB bind to the head domain of Smc. The presence of the three proteins is required for the association of the complex with DNA.

It localises to the cytoplasm. Participates in chromosomal partition during cell division. May act via the formation of a condensin-like complex containing Smc and ScpA that pull DNA away from mid-cell into both cell halves. In Mycoplasma mobile (strain ATCC 43663 / 163K / NCTC 11711) (Mesomycoplasma mobile), this protein is Segregation and condensation protein B.